The chain runs to 156 residues: Small ribosomal subunit protein uS7 (156 aa).

It belongs to the universal ribosomal protein uS7 family. As to quaternary structure, part of the 30S ribosomal subunit. Contacts proteins S9 and S11.

In terms of biological role, one of the primary rRNA binding proteins, it binds directly to 16S rRNA where it nucleates assembly of the head domain of the 30S subunit. Is located at the subunit interface close to the decoding center, probably blocks exit of the E-site tRNA. The polypeptide is Small ribosomal subunit protein uS7 (Onion yellows phytoplasma (strain OY-M)).